A 752-amino-acid polypeptide reads, in one-letter code: MNINPYFLFIDVPIQAAISTTFPYTGVPPYSHGTGTGYTIDTVIRTHEYSNKGKQYISDVTGCAMVDPTNGPLPEDNEPSAYAQLDCVLEALDRMDEEHPGLFQAASQNAMEALMVTTVDKLTQGRQTFDWTVCRNQPAATALNTTITSFRLNDLNGADKGGLVPFCQDIIDSLDKPEMTFFSVKNIKKKLPAKNRKGFLIKRIPMKVKDRITRVEYIKRALSLNTMTKDAERGKLKRRAIATAGIQIRGFVLVVENLAKNICENLEQSGLPVGGNEKKAKLSNAVAKMLSNCPPGGISMTVTGDNTKWNECLNPRIFLAMTERITRDSPIWFRDFCSIAPVLFSNKIARLGKGFMITSKTKRLKAQIPCPDLFNIPLERYNEETRAKLKKLKPFFNEEGTASLSPGMMMGMFNMLSTVLGVAALGIKNIGNREYLWDGLQSSDDFALFVNAKDEETCMEGINDFYRTCKLLGINMSKKKSYCNETGMFEFTSMFYRDGFVSNFAMELPSFGVAGVNESADMAIGMTIIKNNMINNGMGPATAQTAIQLFIADYRYTYKCHRGDSKVEGKRMKIIKELWENTKGRDGLLVADGGPNIYNLRNLHIPEIVLKYNLMDPEYKGRLLHPQNPFVGHLSIEGIKEADITPAHGPIKKMDYDAVSGTHSWRTKRNRSILNTDQRNMILEEQCYAKCCNLFEACFNSASYRKPVGQHSMLEAMAHRLRMDARLDYESGRMSKDDFEKAMAHLGEIGHI.

Short sequence motifs (nuclear localization signal) lie at residues 187–195 (IKKKLPAKN) and 203–216 (RIPM…TRVE). The interval 249 to 256 (RGFVLVVE) is promoter-binding site. Positions 286–482 (VAKMLSNCPP…GINMSKKKSY (197 aa)) constitute a RdRp catalytic domain.

It belongs to the influenza viruses polymerase PB1 family. Influenza RNA polymerase is composed of three subunits: PB1, PB2 and PA. Interacts (via N-terminus) with PA (via C-terminus). Interacts (via C-terminus) with PB2 (via N-terminus); this interaction is essential for transcription initiation. Post-translationally, phosphorylated by host PRKCA.

It localises to the host nucleus. It is found in the host cytoplasm. It carries out the reaction RNA(n) + a ribonucleoside 5'-triphosphate = RNA(n+1) + diphosphate. Its function is as follows. RNA-dependent RNA polymerase which is responsible for replication and transcription of virus RNA segments. The transcription of viral mRNAs occurs by a unique mechanism called cap-snatching. 5' methylated caps of cellular mRNAs are cleaved after 10-13 nucleotides by PA. In turn, these short capped RNAs are used as primers by PB1 for transcription of viral mRNAs. During virus replication, PB1 initiates RNA synthesis and copy vRNA into complementary RNA (cRNA) which in turn serves as a template for the production of more vRNAs. This is RNA-directed RNA polymerase catalytic subunit from Influenza B virus (strain B/Ann Arbor/1/1966 [wild-type]).